We begin with the raw amino-acid sequence, 340 residues long: Phenylalanine--tRNA ligase alpha subunit (340 aa).

Glutamate 258 contributes to the Mg(2+) binding site.

This sequence belongs to the class-II aminoacyl-tRNA synthetase family. Phe-tRNA synthetase alpha subunit type 1 subfamily. As to quaternary structure, tetramer of two alpha and two beta subunits. Mg(2+) is required as a cofactor.

It is found in the cytoplasm. The catalysed reaction is tRNA(Phe) + L-phenylalanine + ATP = L-phenylalanyl-tRNA(Phe) + AMP + diphosphate + H(+). This chain is Phenylalanine--tRNA ligase alpha subunit, found in Corynebacterium efficiens (strain DSM 44549 / YS-314 / AJ 12310 / JCM 11189 / NBRC 100395).